An 886-amino-acid chain; its full sequence is Leucine--tRNA ligase (886 aa).

The 'HIGH' region signature appears at 51–61 (PYPSGRIHMGH). The 'KMSKS' region motif lies at 644-648 (KMSKS). Residue K647 coordinates ATP.

The protein belongs to the class-I aminoacyl-tRNA synthetase family.

The protein resides in the cytoplasm. The enzyme catalyses tRNA(Leu) + L-leucine + ATP = L-leucyl-tRNA(Leu) + AMP + diphosphate. The chain is Leucine--tRNA ligase from Bartonella tribocorum (strain CIP 105476 / IBS 506).